Reading from the N-terminus, the 49-residue chain is Large ribosomal subunit protein bL33A (49 aa).

This sequence belongs to the bacterial ribosomal protein bL33 family.

The polypeptide is Large ribosomal subunit protein bL33A (Streptococcus pneumoniae (strain Hungary19A-6)).